The following is a 65-amino-acid chain: MPKIGPMEILIIVLLVVVVFGVGKLPQVGDAIGKGIRNFRKASTGEDAKEEVETKEETKPAEKSE.

The helical transmembrane segment at 9 to 29 (ILIIVLLVVVVFGVGKLPQVG) threads the bilayer. The interval 40 to 65 (RKASTGEDAKEEVETKEETKPAEKSE) is disordered. Over residues 43–65 (STGEDAKEEVETKEETKPAEKSE) the composition is skewed to basic and acidic residues.

Belongs to the TatA/E family. Forms a complex with TatC.

It is found in the cell membrane. Part of the twin-arginine translocation (Tat) system that transports large folded proteins containing a characteristic twin-arginine motif in their signal peptide across membranes. TatA could form the protein-conducting channel of the Tat system. In Dehalococcoides mccartyi (strain ATCC BAA-2100 / JCM 16839 / KCTC 5957 / BAV1), this protein is Sec-independent protein translocase protein TatA.